Here is an 811-residue protein sequence, read N- to C-terminus: G-type lectin S-receptor-like serine/threonine-protein kinase LECRK2 (811 aa).

Positions Met1 to Ala23 are cleaved as a signal peptide. Residues Gln24 to Gly153 form the Bulb-type lectin domain. Topologically, residues Gln24–Ser464 are extracellular. Residues Asn26, Asn39, Asn59, Asn219, Asn226, Asn237, and Asn242 are each glycosylated (N-linked (GlcNAc...) asparagine). The EGF-like; atypical domain maps to Pro292–Arg344. 5 disulfide bridges follow: Cys296-Cys314, Cys308-Cys325, Cys327-Cys343, Cys389-Cys411, and Cys393-Cys399. N-linked (GlcNAc...) asparagine glycosylation occurs at Asn321. Positions Cys352 to Pro436 constitute a PAN domain. A helical membrane pass occupies residues Leu465 to Thr485. Over Tyr486 to Ala811 the chain is Cytoplasmic. A Protein kinase domain is found at Gly521–Val795. ATP contacts are provided by residues Leu527 to Val535 and Lys551. The Proton acceptor role is filled by Asp645.

This sequence belongs to the protein kinase superfamily. Ser/Thr protein kinase family.

The protein resides in the membrane. The enzyme catalyses L-seryl-[protein] + ATP = O-phospho-L-seryl-[protein] + ADP + H(+). It carries out the reaction L-threonyl-[protein] + ATP = O-phospho-L-threonyl-[protein] + ADP + H(+). Its function is as follows. Involved in resistance against the herbivorous insect brown planthopper (N.lugens, BPH). Member of the BPH3 (BPH resistance locus 3) cluster which contains LECRK1, LECRK2 and LECRK3. The polypeptide is G-type lectin S-receptor-like serine/threonine-protein kinase LECRK2 (Oryza sativa subsp. indica (Rice)).